A 346-amino-acid chain; its full sequence is NADH-ubiquinone oxidoreductase chain 2 (346 aa).

Helical transmembrane passes span 3–23 (PLIF…VMMS), 25–45 (HWLM…PILM), 59–79 (YFLT…INLM), 96–116 (IIMT…FWVP), 122–142 (ISLT…MSIL), 149–169 (INLN…GWGG), 178–198 (IMAY…VYNP), 200–220 (LTML…MLFI), 242–262 (TLIL…GFMP), 274–294 (SSII…YFYM), and 322–342 (ITLL…TPML).

The protein belongs to the complex I subunit 2 family. Core subunit of respiratory chain NADH dehydrogenase (Complex I) which is composed of 45 different subunits. Interacts with TMEM242.

It is found in the mitochondrion inner membrane. It carries out the reaction a ubiquinone + NADH + 5 H(+)(in) = a ubiquinol + NAD(+) + 4 H(+)(out). Its function is as follows. Core subunit of the mitochondrial membrane respiratory chain NADH dehydrogenase (Complex I) which catalyzes electron transfer from NADH through the respiratory chain, using ubiquinone as an electron acceptor. Essential for the catalytic activity and assembly of complex I. This chain is NADH-ubiquinone oxidoreductase chain 2, found in Equus caballus (Horse).